The primary structure comprises 107 residues: Translation initiation factor IF-1, chloroplastic (107 aa).

In terms of domain architecture, S1-like spans 8–83; that stretch reads REKKNPREAK…SKGRIIYRLP (76 aa).

This sequence belongs to the IF-1 family. Component of the 30S ribosomal translation pre-initiation complex which assembles on the 30S ribosome in the order IF-2 and IF-3, IF-1 and N-formylmethionyl-tRNA(fMet); mRNA recruitment can occur at any time during PIC assembly.

The protein resides in the plastid. Its subcellular location is the chloroplast. Functionally, one of the essential components for the initiation of protein synthesis. Stabilizes the binding of IF-2 and IF-3 on the 30S subunit to which N-formylmethionyl-tRNA(fMet) subsequently binds. Helps modulate mRNA selection, yielding the 30S pre-initiation complex (PIC). Upon addition of the 50S ribosomal subunit IF-1, IF-2 and IF-3 are released leaving the mature 70S translation initiation complex. This Lolium perenne (Perennial ryegrass) protein is Translation initiation factor IF-1, chloroplastic.